Reading from the N-terminus, the 155-residue chain is Large ribosomal subunit protein uL30 (155 aa).

The protein belongs to the universal ribosomal protein uL30 family. In terms of assembly, part of the 50S ribosomal subunit.

This chain is Large ribosomal subunit protein uL30, found in Pyrococcus abyssi (strain GE5 / Orsay).